Consider the following 382-residue polypeptide: Galactokinase (382 aa).

Substrate is bound at residue 34 to 37; it reads EHTD. ATP is bound at residue 124–130; the sequence is GAGLSSS. Mg(2+) is bound by residues serine 130 and glutamate 162. Aspartate 174 (proton acceptor) is an active-site residue. Tyrosine 223 contacts substrate.

It belongs to the GHMP kinase family. GalK subfamily.

It localises to the cytoplasm. It catalyses the reaction alpha-D-galactose + ATP = alpha-D-galactose 1-phosphate + ADP + H(+). It participates in carbohydrate metabolism; galactose metabolism. In terms of biological role, catalyzes the transfer of the gamma-phosphate of ATP to D-galactose to form alpha-D-galactose-1-phosphate (Gal-1-P). This Salmonella typhi protein is Galactokinase.